We begin with the raw amino-acid sequence, 226 residues long: Deoxyribose-phosphate aldolase (226 aa).

D84 serves as the catalytic Proton donor/acceptor. K146 functions as the Schiff-base intermediate with acetaldehyde in the catalytic mechanism. The active-site Proton donor/acceptor is K188.

This sequence belongs to the DeoC/FbaB aldolase family. DeoC type 1 subfamily.

Its subcellular location is the cytoplasm. It carries out the reaction 2-deoxy-D-ribose 5-phosphate = D-glyceraldehyde 3-phosphate + acetaldehyde. The protein operates within carbohydrate degradation; 2-deoxy-D-ribose 1-phosphate degradation; D-glyceraldehyde 3-phosphate and acetaldehyde from 2-deoxy-alpha-D-ribose 1-phosphate: step 2/2. In terms of biological role, catalyzes a reversible aldol reaction between acetaldehyde and D-glyceraldehyde 3-phosphate to generate 2-deoxy-D-ribose 5-phosphate. This is Deoxyribose-phosphate aldolase from Pyrobaculum arsenaticum (strain DSM 13514 / JCM 11321 / PZ6).